Here is a 117-residue protein sequence, read N- to C-terminus: Immunoglobulin heavy variable 1-69D (117 aa).

Positions Met1 to Ser19 are cleaved as a signal peptide. Gln20 bears the Pyrrolidone carboxylic acid mark. Positions Gln20 to Ser44 are framework-1. Residues Gln20 to Arg117 enclose the Ig-like domain. A disulfide bond links Cys41 and Cys115. The tract at residues Gly45 to Ala52 is complementarity-determining-1. A framework-2 region spans residues Ile53 to Gly69. The complementarity-determining-2 stretch occupies residues Ile70–Ala77. A framework-3 region spans residues Asn78–Cys115. Residues Ala116–Arg117 form a complementarity-determining-3 region.

In terms of assembly, immunoglobulins are composed of two identical heavy chains and two identical light chains; disulfide-linked.

The protein localises to the secreted. The protein resides in the cell membrane. Functionally, v region of the variable domain of immunoglobulin heavy chains that participates in the antigen recognition. Immunoglobulins, also known as antibodies, are membrane-bound or secreted glycoproteins produced by B lymphocytes. In the recognition phase of humoral immunity, the membrane-bound immunoglobulins serve as receptors which, upon binding of a specific antigen, trigger the clonal expansion and differentiation of B lymphocytes into immunoglobulins-secreting plasma cells. Secreted immunoglobulins mediate the effector phase of humoral immunity, which results in the elimination of bound antigens. The antigen binding site is formed by the variable domain of one heavy chain, together with that of its associated light chain. Thus, each immunoglobulin has two antigen binding sites with remarkable affinity for a particular antigen. The variable domains are assembled by a process called V-(D)-J rearrangement and can then be subjected to somatic hypermutations which, after exposure to antigen and selection, allow affinity maturation for a particular antigen. The chain is Immunoglobulin heavy variable 1-69D from Homo sapiens (Human).